Reading from the N-terminus, the 159-residue chain is Phospholipase A2 AP-PLA2-I (159 aa).

The N-terminal stretch at 1–19 (MNFLVVIVTTVSLAGAASA) is a signal peptide. The propeptide occupies 20-23 (GEIQ). Disulfide bonds link Cys-51–Cys-159, Cys-53–Cys-69, Cys-68–Cys-139, Cys-75–Cys-132, Cys-85–Cys-125, and Cys-110–Cys-130. Ca(2+) is bound by residues Tyr-52, Gly-54, and Gly-56. His-72 is an active-site residue. Residue Asp-73 participates in Ca(2+) binding. Asp-133 is a catalytic residue.

Belongs to the phospholipase A2 family. Group I subfamily. Homodimer. It depends on Ca(2+) as a cofactor. Expressed by the venom gland.

Its subcellular location is the secreted. It carries out the reaction a 1,2-diacyl-sn-glycero-3-phosphocholine + H2O = a 1-acyl-sn-glycero-3-phosphocholine + a fatty acid + H(+). Functionally, starfish phospholipase A2 (PLA2) that has hemorrhagic and capillary permeability-increasing activities and hence is considered to be deeply involved in the local inflammation. Shows hemolytic activity only in the presence of phosphatidylcholine (PC). PLA2 catalyzes the calcium-dependent hydrolysis of the 2-acyl groups in 3-sn-phosphoglycerides. This chain is Phospholipase A2 AP-PLA2-I, found in Acanthaster planci (Crown-of-thorns starfish).